The primary structure comprises 350 residues: Protein TRIGALACTOSYLDIACYLGLYCEROL 1, chloroplastic (350 aa).

The interval 67 to 86 is disordered; sequence SMSMLEEETSTENNAPSQEA. The helical transmembrane segment at 98–117 threads the bilayer; that stretch reads YIWRGLSVPIIAGQVVLRIL. Topologically, residues 118 to 136 are stromal; sequence KGKIHWRNTLQQLERTGPK. Residues 137–157 traverse the membrane as a helical segment; that stretch reads SLGVCLLTSTFVGMAFTIQFV. The Chloroplast intermembrane portion of the chain corresponds to 158 to 168; that stretch reads REFTRLGLNRS. The helical transmembrane segment at 169–189 threads the bilayer; the sequence is IGGVLALAFSRELSPVITSIV. The Stromal segment spans residues 190–229; it reads VAGRMGSAFAAELGTMQVSEQTDTLRVLGADPIDYLITPR. Residues 230 to 250 form a helical membrane-spanning segment; it reads VIASCLALPFLTLMCFTVGMA. Topologically, residues 251–288 are chloroplast intermembrane; it reads SSALLSDAVYGISINIIMDSAHRALRPWDIVSAMIKSQ. Residues 289–309 form a helical membrane-spanning segment; sequence VFGAIISVISCSWGVTTTGGA. Residues 310–318 are Stromal-facing; sequence KGVGESTTS. Residues 319 to 339 traverse the membrane as a helical segment; that stretch reads AVVMSLVGIFIADFVLSSFFF. The Chloroplast intermembrane portion of the chain corresponds to 340-350; that stretch reads QGAGDSLKNCV.

This sequence belongs to the MlaE permease family. Permease subunit of the TGD complex, a lipid translocator at the inner chloroplast envelope membrane made of TGD1, TGD2 and TGD3. Interacts with TGD2 and TGD3 with an overall subunit stoichiometry of 2 TGD1, 2 TGD3 and 8 to 12 TGD2. Interacts with TGD5. High levels in green tissues, but low levels in nongreen tissues such as roots.

It localises to the plastid. It is found in the chloroplast inner membrane. Required during embryogenesis. Permease involved in lipid transfer from the endoplasmic reticulum (ER) to plastids, and necessary for thylakoids formation. This chain is Protein TRIGALACTOSYLDIACYLGLYCEROL 1, chloroplastic, found in Arabidopsis thaliana (Mouse-ear cress).